Here is a 333-residue protein sequence, read N- to C-terminus: Procathepsin L (333 aa).

A signal peptide spans 1–17 (MNPTFILAALCLGIASA). The propeptide at 18–113 (TLTFNHSLEA…KVFQEPLFYE (96 aa)) is activation peptide. Residue Glu-122 coordinates Zn(2+). 2 cysteine pairs are disulfide-bonded: Cys-135-Cys-178 and Cys-169-Cys-211. Residue Cys-138 is part of the active site. Positions 163, 184, 199, 205, 209, 227, 250, 253, 273, and 275 each coordinate Zn(2+). A disulfide bond links Cys-269 and Cys-322. His-276 is a catalytic residue. Residues 289 to 291 (ESD) constitute a propeptide that is removed on maturation. Asn-300 is an active-site residue.

The protein belongs to the peptidase C1 family. In terms of assembly, dimer of a heavy and a light chain linked by disulfide bonds. Interacts with Long isoform of CD74/Ii chain; the interaction stabilizes the conformation of mature CTSL. Post-translationally, during export along the endocytic pathway, pro-CTSL undergoes several proteolytic cleavages to generate the CTSL single-chain and two-chain mature forms, composed of a heavy chain linked to a light chain by disulfide bonds. Autocleavage; produces the single-chain CTSL after cleavage of the propeptide. The cleavage can be intermolecular.

It localises to the lysosome. The protein resides in the apical cell membrane. Its subcellular location is the cytoplasmic vesicle. The protein localises to the secretory vesicle. It is found in the chromaffin granule. It localises to the secreted. The protein resides in the extracellular space. The enzyme catalyses Specificity close to that of papain. As compared to cathepsin B, cathepsin L exhibits higher activity toward protein substrates, but has little activity on Z-Arg-Arg-NHMec, and no peptidyl-dipeptidase activity.. With respect to regulation, inhibited by the propeptide produced by autocleavage. Long isoform of CD74/Ii chain stabilizes the conformation of mature CTSL by binding to its active site and serving as a chaperone to help maintain a pool of mature enzyme in endocytic compartments and extracellular space of APCs. IFNG enhances the conversion into the CTSL mature and active form. Inhibited by CST6. Inhibited by the glycopeptide antibiotic teicoplanin. Inhibited by amantadine. Thiol protease important for the overall degradation of proteins in lysosomes. Plays a critical for normal cellular functions such as general protein turnover, antigen processing and bone remodeling. Involved in the solubilization of cross-linked TG/thyroglobulin and in the subsequent release of thyroid hormone thyroxine (T4) by limited proteolysis of TG/thyroglobulin in the thyroid follicle lumen. In neuroendocrine chromaffin cells secretory vesicles, catalyzes the prohormone proenkephalin processing to the active enkephalin peptide neurotransmitter. In thymus, regulates CD4(+) T cell positive selection by generating the major histocompatibility complex class II (MHCII) bound peptide ligands presented by cortical thymic epithelial cells. Also mediates invariant chain processing in cortical thymic epithelial cells. Major elastin-degrading enzyme at neutral pH. Accumulates as a mature and active enzyme in the extracellular space of antigen presenting cells (APCs) to regulate degradation of the extracellular matrix in the course of inflammation. Secreted form generates endostatin from COL18A1. Critical for cardiac morphology and function. Plays an important role in hair follicle morphogenesis and cycling, as well as epidermal differentiation. Required for maximal stimulation of steroidogenesis by TIMP1. The sequence is that of Procathepsin L (CTSL) from Chlorocebus aethiops (Green monkey).